The primary structure comprises 200 residues: ATP synthase subunit s, mitochondrial (200 aa).

Residues 1–25 (MMLFGKISQQLCGLKKLPWSRDSRY) constitute a mitochondrion transit peptide. The interval 1–61 (MMLFGKISQQ…SEWLLRCGAM (61 aa)) is N-terminal domain. Gly59 serves as a coordination point for Mg(2+). 4 LRR repeats span residues 62–87 (VRYH…KYKI), 88–116 (QAID…KIRL), 117–141 (CKCH…KSML), and 142–173 (EMEI…LSDL). Mg(2+) is bound at residue Thr93.

This sequence belongs to the ATP synthase subunit s family. As to quaternary structure, homotetramer. Associates with ATP synthase.

Its subcellular location is the mitochondrion. It is found in the mitochondrion inner membrane. In terms of biological role, involved in regulation of mitochondrial membrane ATP synthase. Necessary for H(+) conduction of ATP synthase. Facilitates energy-driven catalysis of ATP synthesis by blocking a proton leak through an alternative proton exit pathway. This Bos taurus (Bovine) protein is ATP synthase subunit s, mitochondrial (DMAC2L).